Consider the following 297-residue polypeptide: Ezy-1 protein (297 aa).

3 disordered regions span residues 1-34, 115-151, and 255-297; these read MAAV…GDGG, FTGK…SSSS, and QPAG…SPNM. Positions 123-135 are enriched in acidic residues; that stretch reads AEGDDGEDEEEGE. A compositionally biased stretch (low complexity) spans 136 to 150; it reads AQGVGKDAVDSSSSS. Basic and acidic residues predominate over residues 259–269; it reads DGHEPEPKRPE.

In Chlamydomonas reinhardtii (Chlamydomonas smithii), this protein is Ezy-1 protein (Ezy-1).